A 241-amino-acid chain; its full sequence is Methylthioribulose-1-phosphate dehydratase (241 aa).

A disordered region spans residues M1–E20. Position 100 (C100) interacts with substrate. Zn(2+)-binding residues include H117 and H119. E146 serves as the catalytic Proton donor/acceptor. Position 202 (H202) interacts with Zn(2+).

Belongs to the aldolase class II family. MtnB subfamily. Zn(2+) is required as a cofactor.

Its subcellular location is the cytoplasm. It carries out the reaction 5-(methylsulfanyl)-D-ribulose 1-phosphate = 5-methylsulfanyl-2,3-dioxopentyl phosphate + H2O. It participates in amino-acid biosynthesis; L-methionine biosynthesis via salvage pathway; L-methionine from S-methyl-5-thio-alpha-D-ribose 1-phosphate: step 2/6. Catalyzes the dehydration of methylthioribulose-1-phosphate (MTRu-1-P) into 2,3-diketo-5-methylthiopentyl-1-phosphate (DK-MTP-1-P). This Blastomyces gilchristii (strain SLH14081) (Blastomyces dermatitidis) protein is Methylthioribulose-1-phosphate dehydratase.